Here is a 226-residue protein sequence, read N- to C-terminus: N-acetyltransferase family 8 member 3 (226 aa).

Helical transmembrane passes span 36 to 56 and 58 to 78; these read MLLL…LFLA and GSWL…WFLA. The N-acetyltransferase domain maps to 61-220; the sequence is LLVLLSILTL…PMINLKYSLT (160 aa).

This sequence belongs to the camello family.

Its subcellular location is the nucleus membrane. It localises to the cytoplasm. It is found in the perinuclear region. The catalysed reaction is L-lysyl-[protein] + acetyl-CoA = N(6)-acetyl-L-lysyl-[protein] + CoA + H(+). Functionally, has histone acetyltransferase activity in vitro, with specificity for histone H4. In Mus musculus (Mouse), this protein is N-acetyltransferase family 8 member 3.